The sequence spans 274 residues: Probable S-adenosylmethionine-dependent methyltransferase MT3114 (274 aa).

The disordered stretch occupies residues 1–24 (MCAFVPHVPRHSRGDNPPSASTAS).

The protein belongs to the methyltransferase superfamily.

Its function is as follows. Probable S-adenosylmethionine-dependent methyltransferase required for the 6-O-methylation of the polysaccharide backbone of 6-O-methylglucosyl lipopolysaccharides (MGLP). The chain is Probable S-adenosylmethionine-dependent methyltransferase MT3114 from Mycobacterium tuberculosis (strain CDC 1551 / Oshkosh).